Here is a 1094-residue protein sequence, read N- to C-terminus: Protein transport protein Sec24C (1094 aa).

Positions 1 to 338 (MNVNQSVPPV…PIQVIEDDRN (338 aa)) are disordered. Over residues 8-19 (PPVPPFGQPQPI) the composition is skewed to pro residues. 2 stretches are compositionally biased toward low complexity: residues 20-29 (YPGYHQSSYG) and 60-77 (SRAPPSSGAPPASTAQAP). Residues 90–101 (DVQNGPSSTVQM) show a composition bias toward polar residues. The segment covering 123 to 132 (VLQPYGPPPT) has biased composition (pro residues). 4 stretches are compositionally biased toward polar residues: residues 133–144 (SAQVATQLSGMQ), 165–175 (SLASASGSFPN), 189–215 (PLSQAQGHPGIQTPQRSAPSQASSFTP), and 240–251 (SVSQPNHVSSPP). T214 bears the Phosphothreonine mark. Over residues 273 to 282 (PQQPGYQPQQ) the composition is skewed to low complexity. Zn(2+) is bound by residues C425, C428, C447, and C450. The interval 425-450 (CNRCKAYMCPFMQFIEGGRRFQCCFC) is zinc finger-like. The stretch at 962–1034 (TTEPPAVRAS…DNPLSKKVRG (73 aa)) is one Gelsolin-like repeat.

This sequence belongs to the SEC23/SEC24 family. SEC24 subfamily. COPII is composed of at least five proteins: the Sec23/24 complex, the Sec13/31 complex and Sar1. Interacts with TMED2 and TMED10. Interacts with GOSR2 (via IxM motif) and STX5 (via IxM motif); recruits GOSR2 and STX5 into COPII-coated vesicles. Interacts with DDHD1. Interacts with STING1; promoting STING1 translocation to the COPII vesicles. Ubiquitous.

It is found in the cytoplasmic vesicle. Its subcellular location is the COPII-coated vesicle membrane. The protein resides in the endoplasmic reticulum membrane. The protein localises to the cytoplasm. It localises to the cytosol. In terms of biological role, component of the coat protein complex II (COPII) which promotes the formation of transport vesicles from the endoplasmic reticulum (ER). The coat has two main functions, the physical deformation of the endoplasmic reticulum membrane into vesicles and the selection of cargo molecules for their transport to the Golgi complex. Plays a central role in cargo selection within the COPII complex and together with SEC24D may have a different specificity compared to SEC24A and SEC24B. May more specifically package GPI-anchored proteins through the cargo receptor TMED10. May also be specific for IxM motif-containing cargos like the SNAREs GOSR2 and STX5. The sequence is that of Protein transport protein Sec24C from Homo sapiens (Human).